Here is a 317-residue protein sequence, read N- to C-terminus: Malate dehydrogenase (317 aa).

NAD(+) is bound by residues 7 to 13 (GAAGGIG) and aspartate 34. The substrate site is built by arginine 81 and arginine 87. NAD(+)-binding positions include asparagine 94 and 117 to 119 (VTN). Residues asparagine 119 and arginine 153 each contribute to the substrate site. The Proton acceptor role is filled by histidine 177. Methionine 231 contacts NAD(+).

The protein belongs to the LDH/MDH superfamily. MDH type 1 family. In terms of assembly, homodimer.

The catalysed reaction is (S)-malate + NAD(+) = oxaloacetate + NADH + H(+). Its function is as follows. Catalyzes the reversible oxidation of malate to oxaloacetate. The protein is Malate dehydrogenase of Actinobacillus pleuropneumoniae serotype 7 (strain AP76).